A 203-amino-acid polypeptide reads, in one-letter code: Snake venom metalloproteinase fibrolase (203 aa).

Gln1 bears the Pyrrolidone carboxylic acid mark. In terms of domain architecture, Peptidase M12B spans 7–203 (RYVQLVIVAD…NNPQCILNKP (197 aa)). Cystine bridges form between Cys118/Cys198, Cys158/Cys182, and Cys160/Cys165. Residue His143 coordinates Zn(2+). Residue Glu144 is part of the active site. The Zn(2+) site is built by His147 and His153.

Belongs to the venom metalloproteinase (M12B) family. P-I subfamily. In terms of assembly, monomer. Zn(2+) is required as a cofactor. In terms of tissue distribution, expressed by the venom gland.

Its subcellular location is the secreted. The enzyme catalyses Hydrolysis of 14-Ala-|-Leu-15 in insulin B chain and 413-Lys-|-Leu-414 in alpha-chain of fibrinogen.. Is inhibited by EDTA, o-phenanthroline and tetraethylenepentamine. Its function is as follows. Snake venom zinc metalloprotease that exhibits direct fibrinolytic activity. The polypeptide is Snake venom metalloproteinase fibrolase (Agkistrodon contortrix contortrix (Southern copperhead)).